The sequence spans 378 residues: Septin-5 (378 aa).

The region spanning 50 to 323 (KGFDFTLMVA…ENYRAHCIQQ (274 aa)) is the Septin-type G domain. Positions 60-67 (GESGLGKS) are G1 motif. GTP is bound by residues 60-67 (GESGLGKS), threonine 94, and glycine 120. The G3 motif stretch occupies residues 117–120 (DTPG). Position 177 is an omega-N-methylarginine (arginine 177). Residues 198 to 201 (AKAD) form a G4 motif region. Residue 199-207 (KADCLVPSE) participates in GTP binding. At serine 234 the chain carries Phosphoserine. The GTP site is built by glycine 257 and arginine 272. Position 336 is a phosphoserine (serine 336). The residue at position 345 (threonine 345) is a Phosphothreonine. Positions 347–378 (DAETEKLIRMKDEELRRMQEMLQRMKQQMQDQ) form a coiled coil.

This sequence belongs to the TRAFAC class TrmE-Era-EngA-EngB-Septin-like GTPase superfamily. Septin GTPase family. Septins polymerize into heterooligomeric protein complexes that form filaments, and can associate with cellular membranes, actin filaments and microtubules. GTPase activity is required for filament formation. Interacts with SEPTIN2 and SEPTIN5. In platelets, associated with a complex containing STX4. Interacts with PRKN; this interaction leads to SEPTIN5 ubiquitination and degradation. Interacts with DYRK1A. Interacts with STX1A; in the cerebellar cortex. Phosphorylated by DYRK1A.

The protein localises to the cytoplasm. The protein resides in the cytoskeleton. Its function is as follows. Filament-forming cytoskeletal GTPase. May play a role in cytokinesis (Potential). May play a role in platelet secretion. In Macaca fascicularis (Crab-eating macaque), this protein is Septin-5.